The sequence spans 232 residues: Putative B3 domain-containing protein Os11g0242900 (232 aa).

Residues 1 to 51 (MTVELEKIAGSFFISKGWKTFVHRTGLLSGQYIRFQVLTPSKINVLLFDKK) constitute a DNA-binding region (TF-B3 1). A disordered region spans residues 92 to 121 (SHTSNKETSSDSRTESMTDIPSSSDNSGET). The span at 95–107 (SNKETSSDSRTES) shows a compositional bias: basic and acidic residues. The span at 108-121 (MTDIPSSSDNSGET) shows a compositional bias: polar residues. The TF-B3 2 DNA-binding region spans 140–232 (DIKNYISIIG…PNVKITIDVL (93 aa)).

It localises to the nucleus. The protein is Putative B3 domain-containing protein Os11g0242900 of Oryza sativa subsp. japonica (Rice).